The following is a 164-amino-acid chain: Large ribosomal subunit protein bL17 (164 aa).

The disordered stretch occupies residues 127–164; the sequence is RARTDSVPARKGAGKKDASRVSGTVPDGQSQKIGKKKE.

It belongs to the bacterial ribosomal protein bL17 family. As to quaternary structure, part of the 50S ribosomal subunit. Contacts protein L32.

This is Large ribosomal subunit protein bL17 from Treponema pallidum (strain Nichols).